Consider the following 617-residue polypeptide: V-type proton ATPase catalytic subunit A (617 aa).

The residue at position 136 (Thr-136) is a Phosphothreonine. 250-257 contributes to the ATP binding site; sequence GAFGCGKT. A Phosphoserine; by AMPK modification is found at Ser-384.

This sequence belongs to the ATPase alpha/beta chains family. V-ATPase is a heteromultimeric enzyme made up of two complexes: the ATP-hydrolytic V1 complex and the proton translocation V0 complex. The V1 complex consists of three catalytic AB heterodimers that form a heterohexamer, three peripheral stalks each consisting of EG heterodimers, one central rotor including subunits D and F, and the regulatory subunits C and H. The proton translocation complex V0 consists of the proton transport subunit a, a ring of proteolipid subunits c9c'', rotary subunit d, subunits e and f, and the accessory subunits ATP6AP1/Ac45 and ATP6AP2/PRR. Interacts with the V0 complex V-ATPase subunit a4 ATP6V0A4. Interacts with WFS1. Interacts with alpha-crystallin B chain/CRYAB and with MTOR, forming a ternary complex. Phosphorylation at Ser-384 by AMPK down-regulates its enzyme activity.

Its subcellular location is the cytoplasm. The protein localises to the cytosol. It localises to the cytoplasmic vesicle. It is found in the secretory vesicle. The protein resides in the clathrin-coated vesicle membrane. Its subcellular location is the lysosome. The enzyme catalyses ATP + H2O + 4 H(+)(in) = ADP + phosphate + 5 H(+)(out). Its activity is regulated as follows. ATP hydrolysis occurs at the interface between the nucleotide-binding domains of subunits A and B. ATP hydrolysis triggers a conformational change in the subunits D and F, which induces a shift of subunit d. The c-ring is subsequently rotated and results in a continuous proton translocation across the membrane. Catalytic subunit of the V1 complex of vacuolar(H+)-ATPase (V-ATPase), a multisubunit enzyme composed of a peripheral complex (V1) that hydrolyzes ATP and a membrane integral complex (V0) that translocates protons. V-ATPase is responsible for acidifying and maintaining the pH of intracellular compartments and in some cell types, is targeted to the plasma membrane, where it is responsible for acidifying the extracellular environment. In aerobic conditions, involved in intracellular iron homeostasis, thus triggering the activity of Fe(2+) prolyl hydroxylase (PHD) enzymes, and leading to HIF1A hydroxylation and subsequent proteasomal degradation. May play a role in neurite development and synaptic connectivity. This is V-type proton ATPase catalytic subunit A (ATP6V1A) from Sus scrofa (Pig).